The following is a 411-amino-acid chain: Anaerobic sulfatase-maturating enzyme homolog AslB (411 aa).

A Radical SAM core domain is found at 3-250 (QQVPTRAFHV…LVAIFDHWIK (248 aa)). Cysteine 21 and cysteine 25 together coordinate [4Fe-4S] cluster. Tyrosine 27 provides a ligand contact to S-adenosyl-L-methionine. Cysteine 28 is a [4Fe-4S] cluster binding site. Glycine 74, serine 129, and arginine 141 together coordinate S-adenosyl-L-methionine. Positions 276, 282, and 297 each coordinate [4Fe-4S] cluster. The active-site Proton acceptor is the aspartate 298. Positions 339, 342, 348, 352, and 371 each coordinate [4Fe-4S] cluster.

The protein belongs to the radical SAM superfamily. Anaerobic sulfatase-maturating enzyme family. The cofactor is [4Fe-4S] cluster.

This is Anaerobic sulfatase-maturating enzyme homolog AslB (aslB) from Escherichia coli (strain K12).